The following is a 344-amino-acid chain: Ion-translocating oxidoreductase complex subunit D (344 aa).

The next 4 membrane-spanning stretches (helical) occupy residues Leu-23–Thr-43, Leu-44–Leu-64, Val-80–Val-100, and Pro-120–Thr-140. Position 172 is an FMN phosphoryl threonine (Thr-172). 5 consecutive transmembrane segments (helical) span residues Leu-198–Leu-218, Leu-222–Phe-242, Gly-252–Thr-272, Leu-285–Pro-305, and Asp-306–Thr-326.

The protein belongs to the NqrB/RnfD family. As to quaternary structure, the complex is composed of six subunits: RnfA, RnfB, RnfC, RnfD, RnfE and RnfG. The cofactor is FMN.

Its subcellular location is the cell inner membrane. In terms of biological role, part of a membrane-bound complex that couples electron transfer with translocation of ions across the membrane. The chain is Ion-translocating oxidoreductase complex subunit D from Pseudomonas paraeruginosa (strain DSM 24068 / PA7) (Pseudomonas aeruginosa (strain PA7)).